Here is a 123-residue protein sequence, read N- to C-terminus: Urotensin-2 (123 aa).

The signal sequence occupies residues 1-20 (MDRVPFCCLLFIGLLNPLLS). 2 propeptides span residues 21–104 (LPVT…LART) and 107–109 (QHK). The segment at 57 to 88 (RQTMGTEAGESPGEAGPSTETPTPRGSMRKAF) is disordered. The cysteines at positions 117 and 122 are disulfide-linked.

This sequence belongs to the urotensin-2 family. Brain specific. Predominantly expressed in motoneurons of the brainstem and spinal cord.

The protein localises to the secreted. In terms of biological role, highly potent vasoconstrictor. The polypeptide is Urotensin-2 (Uts2) (Mus musculus (Mouse)).